We begin with the raw amino-acid sequence, 375 residues long: Mitochondrial phosphate carrier protein 3, mitochondrial (375 aa).

Residues 76 to 96 (AFYAACTFGGILSCGLTHMTV) form a helical membrane-spanning segment. 3 Solcar repeats span residues 76–160 (AFYA…FKKT), 173–257 (YKTL…IVEM), and 274–353 (LQLG…FKVF). Residues 97-134 (TPLDLVKCNMQIDPAKYKSISSGFGILLKEQGVKGFFR) are Mitochondrial matrix-facing. A helical membrane pass occupies residues 135–154 (GWVPTLLGYSAQGACKFGFY). Residues 155 to 175 (EYFKKTYSDLAGPEYTAKYKT) are Mitochondrial intermembrane-facing. Residues 176–196 (LIYLAGSASAEIIADIALCPF) traverse the membrane as a helical segment. Over 197–231 (EAVKVRVQTQPGFARGMSDGFPKFIKSEGYGGLYK) the chain is Mitochondrial matrix. A helical membrane pass occupies residues 232-251 (GLAPLWGRQIPYTMMKFASF). Over 252-272 (ETIVEMIYKYAIPNPKSECSK) the chain is Mitochondrial intermembrane. The chain crosses the membrane as a helical span at residues 273–293 (GLQLGVSFAGGYVAGVFCAIV). Residues 294 to 332 (SHPADNLVSFLNNAKGATVGDAVKKIGMVGLFTRGLPLR) are Mitochondrial matrix-facing. The helical transmembrane segment at 333–353 (IVMIGTLTGAQWGLYDAFKVF) threads the bilayer. Residues 354–375 (VGLPTTGGVAPAPAIAATEAKA) lie on the Mitochondrial intermembrane side of the membrane.

The protein belongs to the mitochondrial carrier (TC 2.A.29) family. In terms of tissue distribution, expressed in stems, leaves and flowers. Strong expression in vascular tissues.

It localises to the mitochondrion inner membrane. Its function is as follows. Transport of phosphate groups from the cytosol to the mitochondrial matrix. Mediates salt stress tolerance through an ATP-dependent pathway and via modulation of the gibberellin metabolism. The protein is Mitochondrial phosphate carrier protein 3, mitochondrial (MPT3) of Arabidopsis thaliana (Mouse-ear cress).